The sequence spans 391 residues: Na(+)/H(+) antiporter NhaA (391 aa).

A run of 11 helical transmembrane segments spans residues 14 to 34, 59 to 79, 95 to 115, 124 to 144, 154 to 174, 177 to 197, 213 to 233, 261 to 281, 292 to 312, 331 to 351, and 363 to 383; these read AGGI…NSPL, LIHW…GLEV, SLPT…YLIF, VGWA…MALL, VFLL…IALF, TDLS…LIGL, LILW…GVII, FIIL…GMSL, IALG…YIAV, VAVM…LAFV, and LGIL…LSKV.

This sequence belongs to the NhaA Na(+)/H(+) (TC 2.A.33) antiporter family.

It is found in the cell inner membrane. The catalysed reaction is Na(+)(in) + 2 H(+)(out) = Na(+)(out) + 2 H(+)(in). Functionally, na(+)/H(+) antiporter that extrudes sodium in exchange for external protons. This Shewanella pealeana (strain ATCC 700345 / ANG-SQ1) protein is Na(+)/H(+) antiporter NhaA.